The primary structure comprises 223 residues: Thiamine-phosphate synthase (223 aa).

Residues 37-41 (QFREK) and aspartate 72 each bind 4-amino-2-methyl-5-(diphosphooxymethyl)pyrimidine. Positions 73 and 92 each coordinate Mg(2+). Serine 110 provides a ligand contact to 4-amino-2-methyl-5-(diphosphooxymethyl)pyrimidine. 136–138 (TQS) is a 2-[(2R,5Z)-2-carboxy-4-methylthiazol-5(2H)-ylidene]ethyl phosphate binding site. Position 139 (lysine 139) interacts with 4-amino-2-methyl-5-(diphosphooxymethyl)pyrimidine. Residues glycine 168 and 188-189 (IS) contribute to the 2-[(2R,5Z)-2-carboxy-4-methylthiazol-5(2H)-ylidene]ethyl phosphate site.

The protein belongs to the thiamine-phosphate synthase family. It depends on Mg(2+) as a cofactor.

The catalysed reaction is 2-[(2R,5Z)-2-carboxy-4-methylthiazol-5(2H)-ylidene]ethyl phosphate + 4-amino-2-methyl-5-(diphosphooxymethyl)pyrimidine + 2 H(+) = thiamine phosphate + CO2 + diphosphate. It carries out the reaction 2-(2-carboxy-4-methylthiazol-5-yl)ethyl phosphate + 4-amino-2-methyl-5-(diphosphooxymethyl)pyrimidine + 2 H(+) = thiamine phosphate + CO2 + diphosphate. The enzyme catalyses 4-methyl-5-(2-phosphooxyethyl)-thiazole + 4-amino-2-methyl-5-(diphosphooxymethyl)pyrimidine + H(+) = thiamine phosphate + diphosphate. The protein operates within cofactor biosynthesis; thiamine diphosphate biosynthesis; thiamine phosphate from 4-amino-2-methyl-5-diphosphomethylpyrimidine and 4-methyl-5-(2-phosphoethyl)-thiazole: step 1/1. In terms of biological role, condenses 4-methyl-5-(beta-hydroxyethyl)thiazole monophosphate (THZ-P) and 2-methyl-4-amino-5-hydroxymethyl pyrimidine pyrophosphate (HMP-PP) to form thiamine monophosphate (TMP). The protein is Thiamine-phosphate synthase of Streptococcus agalactiae serotype Ia (strain ATCC 27591 / A909 / CDC SS700).